Here is a 252-residue protein sequence, read N- to C-terminus: Maintenance of carboxysome distribution protein A (252 aa).

ATP contacts are provided by G11, G12, G14, K15, T16, T17, Q41, E147, K151, F182, R183, L216, E217, and S218. T16 lines the Mg(2+) pocket.

It belongs to the ParA family. McdA subfamily. In terms of assembly, self-associates (probably a homodimer), interacts with McdB probably via the C-terminus of both proteins. Shows no signs of filament formation. Homodimerizes in the presence of ATP, making extra nucleotide contacts than with ADP or AMP-PNP. Each subunit binds 1 ATP molecule; Glu-147, Lys-151 and Arg-183 cross the dimer interface to contact ATP in the other subunit, while Phe-182, Arg-183 and Phe-221 stack with the adenine base in their own subunit.

It localises to the cytoplasm. It is found in the nucleoid. It carries out the reaction ATP + H2O = ADP + phosphate + H(+). Functionally, mcdA and McdB together mediate carboxysome (Cb) spacing, size, ultrastructure and probably inheritance in the cell. Together they prevent Cb aggregation. McdA is an ATPase that forms dynamic gradients on the nucleoid in response to adapter protein McdB, which associates with carboxysomes. The interplay between McdA gradients on the nucleoid and McdB-bound carboxysomes result in the equal spacing of Cbs along the cell length. Binds nucleoid DNA in an ATP-dependent manner; neither ADP nor ATP-gamma-S support DNA binding. Upon ATP-binding dimerizes and binds nucleoid DNA; the (McdA-ATP)2 dimer transiently binds McdB-bound Cbs. McdA's ATPase activity is stimulated 2-fold by DNA and McdB; ATP hydrolysis causes McdA release from DNA. Overexpression leads to loss of McdA oscillation, diffuse nucleoid staining by McdA with formation of large carboxysome aggregates that are in regions depleted of McdA; McdA remains nucleoid-associated. Its function is as follows. Mutagenesis studies (characterized in vivo) suggest ATP binding, protein dimerization and a conformational change are necessary for nucleoid DNA-binding and binding to McdB-bound Cbs, which tethers Cbs to the nucleoid. Eventual McdB-stimulated ATP hydrolysis causes de-dimerization of McdA which no longer binds the nucleoid and releases McdB and Cbs. McdB-bound Cbs then move to a region of higher McdA concentration, distributing Cbs across the nucleoid. In terms of biological role, incorrect positioning (aggregation) of carboxysomes results in reduced CO(2) fixation by encapsulated ribulose-1,5-bisphosphate carboxylase (RuBisCO, cbbL/cbbS), which leads to slower growth, cell elongation, asymmetric cell division and an increase in RuBisCO levels. This is Maintenance of carboxysome distribution protein A from Synechococcus elongatus (strain ATCC 33912 / PCC 7942 / FACHB-805) (Anacystis nidulans R2).